A 239-amino-acid chain; its full sequence is 1-(5-phosphoribosyl)-5-[(5-phosphoribosylamino)methylideneamino] imidazole-4-carboxamide isomerase (239 aa).

The active-site Proton acceptor is D8. D129 acts as the Proton donor in catalysis.

The protein belongs to the HisA/HisF family.

It localises to the cytoplasm. It catalyses the reaction 1-(5-phospho-beta-D-ribosyl)-5-[(5-phospho-beta-D-ribosylamino)methylideneamino]imidazole-4-carboxamide = 5-[(5-phospho-1-deoxy-D-ribulos-1-ylimino)methylamino]-1-(5-phospho-beta-D-ribosyl)imidazole-4-carboxamide. It participates in amino-acid biosynthesis; L-histidine biosynthesis; L-histidine from 5-phospho-alpha-D-ribose 1-diphosphate: step 4/9. The polypeptide is 1-(5-phosphoribosyl)-5-[(5-phosphoribosylamino)methylideneamino] imidazole-4-carboxamide isomerase (Bacillus mycoides (strain KBAB4) (Bacillus weihenstephanensis)).